A 102-amino-acid polypeptide reads, in one-letter code: MDIQRVKRLLSITNDKHDEYLTEMVPLLVEFAKDECHNPFIDKDGNESIPSGVLIFVAKAAQFYMTNAGLTGRSMDTVSYNFATEIPSTILKKLNPYRKMAR.

The protein belongs to the Caudoviricetes gp6/gp15 head completion protein family. Homododecamer. Interacts with the stopper protein gp16. Interacts with the portal protein; this interaction occurs at the end of the packaging when the terminase complex is replaced by the connector.

The protein resides in the virion. Head completion protein that exhibits an open central channel for viral DNA ejection. Part of the head-tail connector by binding to the portal protein and to the head completion protein 16. In Bacillus phage SPP1 (Bacteriophage SPP1), this protein is Head completion protein gp15.